The sequence spans 145 residues: Transcription antitermination protein NusB (145 aa).

The protein belongs to the NusB family.

Functionally, involved in transcription antitermination. Required for transcription of ribosomal RNA (rRNA) genes. Binds specifically to the boxA antiterminator sequence of the ribosomal RNA (rrn) operons. This is Transcription antitermination protein NusB from Aromatoleum aromaticum (strain DSM 19018 / LMG 30748 / EbN1) (Azoarcus sp. (strain EbN1)).